The following is a 1145-amino-acid chain: DNA polymerase II large subunit (1145 aa).

The segment at 284-303 is disordered; it reads KSSSESDEDEETDGKPKIKP.

Belongs to the archaeal DNA polymerase II family. As to quaternary structure, heterodimer of a large subunit and a small subunit.

The enzyme catalyses DNA(n) + a 2'-deoxyribonucleoside 5'-triphosphate = DNA(n+1) + diphosphate. The catalysed reaction is Exonucleolytic cleavage in the 3'- to 5'-direction to yield nucleoside 5'-phosphates.. In terms of biological role, possesses two activities: a DNA synthesis (polymerase) and an exonucleolytic activity that degrades single-stranded DNA in the 3'- to 5'-direction. Has a template-primer preference which is characteristic of a replicative DNA polymerase. The polypeptide is DNA polymerase II large subunit (Methanococcoides burtonii (strain DSM 6242 / NBRC 107633 / OCM 468 / ACE-M)).